The chain runs to 471 residues: Siroheme synthase (471 aa).

A precorrin-2 dehydrogenase /sirohydrochlorin ferrochelatase region spans residues M1–L203. Residues E22–V23 and R43–A44 contribute to the NAD(+) site. The residue at position 128 (S128) is a Phosphoserine. Residues G215 to A471 are uroporphyrinogen-III C-methyltransferase. An S-adenosyl-L-methionine-binding site is contributed by P224. D247 (proton acceptor) is an active-site residue. K269 serves as the catalytic Proton donor. Residues G300–D302, I305, T330–A331, M382, and G411 contribute to the S-adenosyl-L-methionine site.

In the N-terminal section; belongs to the precorrin-2 dehydrogenase / sirohydrochlorin ferrochelatase family. This sequence in the C-terminal section; belongs to the precorrin methyltransferase family.

The enzyme catalyses uroporphyrinogen III + 2 S-adenosyl-L-methionine = precorrin-2 + 2 S-adenosyl-L-homocysteine + H(+). It carries out the reaction precorrin-2 + NAD(+) = sirohydrochlorin + NADH + 2 H(+). The catalysed reaction is siroheme + 2 H(+) = sirohydrochlorin + Fe(2+). Its pathway is cofactor biosynthesis; adenosylcobalamin biosynthesis; precorrin-2 from uroporphyrinogen III: step 1/1. The protein operates within cofactor biosynthesis; adenosylcobalamin biosynthesis; sirohydrochlorin from precorrin-2: step 1/1. It participates in porphyrin-containing compound metabolism; siroheme biosynthesis; precorrin-2 from uroporphyrinogen III: step 1/1. It functions in the pathway porphyrin-containing compound metabolism; siroheme biosynthesis; siroheme from sirohydrochlorin: step 1/1. Its pathway is porphyrin-containing compound metabolism; siroheme biosynthesis; sirohydrochlorin from precorrin-2: step 1/1. Functionally, multifunctional enzyme that catalyzes the SAM-dependent methylations of uroporphyrinogen III at position C-2 and C-7 to form precorrin-2 via precorrin-1. Then it catalyzes the NAD-dependent ring dehydrogenation of precorrin-2 to yield sirohydrochlorin. Finally, it catalyzes the ferrochelation of sirohydrochlorin to yield siroheme. In Sodalis glossinidius (strain morsitans), this protein is Siroheme synthase.